A 59-amino-acid chain; its full sequence is uncharacterized protein (59 aa).

This is an uncharacterized protein from Sulfolobus islandicus rod-shaped virus 1 (SIRV-1).